Here is a 1123-residue protein sequence, read N- to C-terminus: Mediator of RNA polymerase II transcription subunit 14 (1123 aa).

The segment at 450-484 (KQSDASDEQQNNIEPNEESLEDLREDNNEDESEPQ) is disordered.

Belongs to the Mediator complex subunit 14 family. Component of the Mediator complex.

The protein resides in the nucleus. Its function is as follows. Component of the Mediator complex, a coactivator involved in the regulated transcription of nearly all RNA polymerase II-dependent genes. Mediator functions as a bridge to convey information from gene-specific regulatory proteins to the basal RNA polymerase II transcription machinery. Mediator is recruited to promoters by direct interactions with regulatory proteins and serves as a scaffold for the assembly of a functional preinitiation complex with RNA polymerase II and the general transcription factors. The sequence is that of Mediator of RNA polymerase II transcription subunit 14 (RGR1) from Debaryomyces hansenii (strain ATCC 36239 / CBS 767 / BCRC 21394 / JCM 1990 / NBRC 0083 / IGC 2968) (Yeast).